The following is a 179-amino-acid chain: MASSATMLSSVATAARAAPAQASMVAPFVGLKSASAFPVTQKPATGLSTLPSNGGRVQCMKVWPIVGLKKFETLSYLPTLSVESLLKQIEYLIRNGWVPCLEFSLEGFVSRDNNKSPGYYDGRYWTMWKLPMFGCTDAAQVVKEAAECKKEYPAAFIRVIGFDNVRQVQCVSFIVEKPE.

The transit peptide at 1-58 directs the protein to the chloroplast; it reads MASSATMLSSVATAARAAPAQASMVAPFVGLKSASAFPVTQKPATGLSTLPSNGGRVQ.

The protein belongs to the RuBisCO small chain family. Heterohexadecamer of 8 large and 8 small subunits.

Its subcellular location is the plastid. The protein localises to the chloroplast. RuBisCO catalyzes two reactions: the carboxylation of D-ribulose 1,5-bisphosphate, the primary event in carbon dioxide fixation, as well as the oxidative fragmentation of the pentose substrate. Both reactions occur simultaneously and in competition at the same active site. Although the small subunit is not catalytic it is essential for maximal activity. The chain is Ribulose bisphosphate carboxylase small subunit, chloroplastic 3 from Fritillaria agrestis (Stinkbells).